Here is a 356-residue protein sequence, read N- to C-terminus: Alanine racemase, catabolic (356 aa).

The active-site Proton acceptor; specific for D-alanine is Lys-35. Lys-35 carries the post-translational modification N6-(pyridoxal phosphate)lysine. Arg-130 is a substrate binding site. Tyr-253 (proton acceptor; specific for L-alanine) is an active-site residue. Met-301 contacts substrate.

The protein belongs to the alanine racemase family. In terms of assembly, monomer. Pyridoxal 5'-phosphate is required as a cofactor.

It carries out the reaction L-alanine = D-alanine. Inactivated by D- and L-beta-fluoroalanine, D- and L-beta-chloroalanine, and O-acetyl-D-serine. Isomerizes L-alanine to D-alanine which is then oxidized to pyruvate by DadA. The protein is Alanine racemase, catabolic (dadX) of Salmonella typhimurium (strain LT2 / SGSC1412 / ATCC 700720).